A 396-amino-acid polypeptide reads, in one-letter code: MAKAKFERNKPHCNIGTIGHVDHGKTSLTAAITKVLAETGGATFTAYDQIDKAPEEKARGITISTAHVEYETSNRHYAHVDCPGHADYVKNMITGAAQMDGAILVVSAADGPMPQTREHILLARQVGVPALVVFLNKCDMVDDPELLELVEMEVRELLSKYDFPGDDIPIVKGSALAALENSDAKLGHDAILELMKAVDAYIPQPERPIDQPFLMPVEDVFSISGRGTVVTGRVERGIVKVGEEIEIVGIRDTQKTTCTGVEMFRKLLDQGQAGDNIGCLLRGTKREDVERGQVLCKPGSVKPHTKFKAEAYILTKEEGGRHTPFFTNYRPQFYFRTTDVTGVVHLPEGTEMVMPGDNIAMEVHLIVPIAMEEKLRFAIREGGRTVGAGVVASIIE.

The 197-residue stretch at 10–206 (KPHCNIGTIG…AVDAYIPQPE (197 aa)) folds into the tr-type G domain. A G1 region spans residues 19-26 (GHVDHGKT). 19-26 (GHVDHGKT) serves as a coordination point for GTP. Position 26 (Thr26) interacts with Mg(2+). The G2 stretch occupies residues 60–64 (GITIS). A G3 region spans residues 81–84 (DCPG). Residues 81–85 (DCPGH) and 136–139 (NKCD) contribute to the GTP site. Positions 136–139 (NKCD) are G4. The tract at residues 174–176 (SAL) is G5.

This sequence belongs to the TRAFAC class translation factor GTPase superfamily. Classic translation factor GTPase family. EF-Tu/EF-1A subfamily. As to quaternary structure, monomer.

It localises to the cytoplasm. The catalysed reaction is GTP + H2O = GDP + phosphate + H(+). Functionally, GTP hydrolase that promotes the GTP-dependent binding of aminoacyl-tRNA to the A-site of ribosomes during protein biosynthesis. This is Elongation factor Tu 2 from Rhodopseudomonas palustris (strain BisB5).